Consider the following 134-residue polypeptide: MVSQDFSREKRLLTPRHFKAVFDSPTGKVPGKNLLILARENGLDHPRLGLVIGKKSVKLAVQRNRLKRLMRDSFRLNQQSLAGLDIVIVARKGLGEIENPELHQHFGKLWKRLARSRPTPAATANSAGVDSQDA.

Belongs to the RnpA family. Consists of a catalytic RNA component (M1 or rnpB) and a protein subunit.

It catalyses the reaction Endonucleolytic cleavage of RNA, removing 5'-extranucleotides from tRNA precursor.. In terms of biological role, RNaseP catalyzes the removal of the 5'-leader sequence from pre-tRNA to produce the mature 5'-terminus. It can also cleave other RNA substrates such as 4.5S RNA. The protein component plays an auxiliary but essential role in vivo by binding to the 5'-leader sequence and broadening the substrate specificity of the ribozyme. The sequence is that of Ribonuclease P protein component from Pseudomonas putida (strain GB-1).